The primary structure comprises 485 residues: MPVPPPPPPPLPPPPPPLGAPPPPPPPGPPISTDAPSLRKSDLKGRSALLADIQQGTRLRKVTQINDRSAPQIESSKGTSKEGGAAGSNARGGSTPPALGDLFAGGFPVLRPAGQRDVAGGKTGQGPGSRAPSPRLPTKAISGPLPAPASPRLGNASDTHSSARPVPPRPSVPAPPPPTTPPPPPPPPPPPPPPPLPPASPIKAPSVSPPVPPTKGNPSAVPAPIPCVPPLPPPPPTPPPLPPASALSEKAVRPQLAPLHLPPIPPPLPLLPPYGYPALHSEPSSPAQDVREPPAPPPPPPPPPPPPPPPLPTYASCSPRAAVAPPPPPLPGSSNSGSETPPPLPPKSPSFQTQKALPTPPGAPGPQIILQKKRRGPGAGGGKLNPPPAPPARSPTTELSSKTQQPGGQLRNGGQHVIDDFESKFTFHSMEDFPPPDEYKPGQKIYPSKVPRSRTPGSWLQAEAAGQSSDDIKTRNSQLSLKALR.

Residues 1-30 (MPVPPPPPPPLPPPPPPLGAPPPPPPPGPP) are compositionally biased toward pro residues. The disordered stretch occupies residues 1 to 485 (MPVPPPPPPP…NSQLSLKALR (485 aa)). Short sequence motifs (profilin-binding motif) lie at residues 3 to 8 (VPPPPP), 11 to 16 (LPPPPP), and 20 to 25 (APPPPP). Residues 45-62 (GRSALLADIQQGTRLRKV) form the WH2 domain. Residue Arg-46 is modified to Asymmetric dimethylarginine. Positions 58-61 (RLRK) match the RLRK motif. Over residues 63 to 78 (TQINDRSAPQIESSKG) the composition is skewed to polar residues. Ser-150 bears the Phosphoserine mark. Pro residues-rich tracts occupy residues 165–200 (PVPP…PPAS) and 207–243 (VSPP…PLPP). The residue at position 208 (Ser-208) is a Phosphoserine. Residues 244–259 (ASALSEKAVRPQLAPL) are compositionally biased toward low complexity. Composition is skewed to pro residues over residues 260-275 (HLPP…PPYG) and 293-312 (PPAP…PPLP). A Phosphoserine modification is found at Ser-394. A compositionally biased stretch (polar residues) spans 396 to 407 (TTELSSKTQQPG). Residues 417–441 (VIDDFESKFTFHSMEDFPPPDEYKP) are compositionally biased toward basic and acidic residues. The WASP-binding motif signature appears at 426 to 450 (TFHSMEDFPPPDEYKPGQKIYPSKV). Positions 475 to 485 (RNSQLSLKALR) are enriched in polar residues.

The protein belongs to the verprolin family. In terms of assembly, isoform 1 interacts with WASL (via WH1 domain), and monomeric and filamentous actin. As to expression, detected mainly in brain and at lower levels in heart and lung (at protein level). Also detected in testis but not in kidney, liver or spleen.

Its subcellular location is the cytoplasm. May have a role in spermatogenesis. May be a regulator of cytoskeletal organization. The sequence is that of WAS/WASL-interacting protein family member 3 (Wipf3) from Rattus norvegicus (Rat).